A 161-amino-acid chain; its full sequence is 2-C-methyl-D-erythritol 2,4-cyclodiphosphate synthase (161 aa).

Residues aspartate 10 and histidine 12 each contribute to the a divalent metal cation site. Residues 10–12 and 36–37 contribute to the 4-CDP-2-C-methyl-D-erythritol 2-phosphate site; these read DVH and HS. Position 44 (histidine 44) interacts with a divalent metal cation. Residues 58–60, 134–137, phenylalanine 141, and arginine 144 each bind 4-CDP-2-C-methyl-D-erythritol 2-phosphate; these read DIG and TTTE.

It belongs to the IspF family. In terms of assembly, homotrimer. It depends on a divalent metal cation as a cofactor.

The catalysed reaction is 4-CDP-2-C-methyl-D-erythritol 2-phosphate = 2-C-methyl-D-erythritol 2,4-cyclic diphosphate + CMP. Its pathway is isoprenoid biosynthesis; isopentenyl diphosphate biosynthesis via DXP pathway; isopentenyl diphosphate from 1-deoxy-D-xylulose 5-phosphate: step 4/6. In terms of biological role, involved in the biosynthesis of isopentenyl diphosphate (IPP) and dimethylallyl diphosphate (DMAPP), two major building blocks of isoprenoid compounds. Catalyzes the conversion of 4-diphosphocytidyl-2-C-methyl-D-erythritol 2-phosphate (CDP-ME2P) to 2-C-methyl-D-erythritol 2,4-cyclodiphosphate (ME-CPP) with a corresponding release of cytidine 5-monophosphate (CMP). The chain is 2-C-methyl-D-erythritol 2,4-cyclodiphosphate synthase from Parabacteroides distasonis (strain ATCC 8503 / DSM 20701 / CIP 104284 / JCM 5825 / NCTC 11152).